A 77-amino-acid polypeptide reads, in one-letter code: Putative antitoxin VapB3 (77 aa).

This sequence belongs to the UPF0330 family.

Functionally, possibly the antitoxin component of a type II toxin-antitoxin (TA) system. Its cognate toxin is VapC3 (Potential). This chain is Putative antitoxin VapB3 (vapB3), found in Methanocaldococcus jannaschii (strain ATCC 43067 / DSM 2661 / JAL-1 / JCM 10045 / NBRC 100440) (Methanococcus jannaschii).